A 194-amino-acid polypeptide reads, in one-letter code: Interleukin-17C (194 aa).

Residues Met-1–Gln-16 form the signal peptide. 2 cysteine pairs are disulfide-bonded: Cys-125/Cys-185 and Cys-130/Cys-187.

It belongs to the IL-17 family. As to quaternary structure, binds to a heterodimer formed by IL17RA and IL17RE. As to expression, expressed by epithelial cells after bacterial challenge. Low expression, if any, in lymphocytes.

It is found in the secreted. In terms of biological role, cytokine that plays a crucial role in innate immunity of the epithelium, including to intestinal bacterial pathogens, in an autocrine manner. Stimulates the production of antibacterial peptides and pro-inflammatory molecules for host defense by signaling through the NFKB and MAPK pathways. Acts synergically with IL22, TNF and IL1B in inducing antibacterial peptides. May have protective function by maintaining epithelial homeostasis after an inflammatory challenge, such as that caused in the intestine by dextran sulfate sodium in a colitis model. May also promote an inflammatory phenotype, such as skin in a psoriasis model. Enhanced IL17C/IL17RE signaling may also lead to greater susceptibility to autoimmune diseases, such as autoimmune encephalitis. The chain is Interleukin-17C (Il17c) from Mus musculus (Mouse).